Reading from the N-terminus, the 455-residue chain is Bleomycin hydrolase (455 aa).

At methionine 1 the chain carries N-acetylmethionine. Residues cysteine 73 and histidine 372 contribute to the active site. Lysine 391 carries the N6-acetyllysine modification. Asparagine 396 is a catalytic residue.

It belongs to the peptidase C1 family. In terms of assembly, homohexamer. Interacts with NUDT12 (via ANK repeats).

Its subcellular location is the cytoplasm. It localises to the cytoplasmic granule. It catalyses the reaction Inactivates bleomycin B2 (a cytotoxic glycometallopeptide) by hydrolysis of a carboxyamide bond of beta-aminoalanine, but also shows general aminopeptidase activity. The specificity varies somewhat with source, but amino acid arylamides of Met, Leu and Ala are preferred.. In terms of biological role, the normal physiological role of BLM hydrolase is unknown, but it catalyzes the inactivation of the antitumor drug BLM (a glycopeptide) by hydrolyzing the carboxamide bond of its B-aminoalaninamide moiety thus protecting normal and malignant cells from BLM toxicity. This Homo sapiens (Human) protein is Bleomycin hydrolase (BLMH).